The following is a 701-amino-acid chain: Polyribonucleotide nucleotidyltransferase (701 aa).

Residues Asp-487 and Asp-493 each coordinate Mg(2+). In terms of domain architecture, KH spans 554–613 (PTMIAMKIDTDKIRDVIGKGGATIRAICEETKASIDIEDDGSIKIFGETKEAAEAAKQRI). Positions 623–691 (GKIYVGKVER…NRGRIKLSIK (69 aa)) constitute an S1 motif domain.

Belongs to the polyribonucleotide nucleotidyltransferase family. As to quaternary structure, component of the RNA degradosome, which is a multiprotein complex involved in RNA processing and mRNA degradation. Mg(2+) is required as a cofactor.

Its subcellular location is the cytoplasm. It carries out the reaction RNA(n+1) + phosphate = RNA(n) + a ribonucleoside 5'-diphosphate. Functionally, involved in mRNA degradation. Catalyzes the phosphorolysis of single-stranded polyribonucleotides processively in the 3'- to 5'-direction. This Pseudomonas putida (strain GB-1) protein is Polyribonucleotide nucleotidyltransferase.